Consider the following 424-residue polypeptide: GTPase Obg (424 aa).

The Obg domain maps to 1-158 (MFYDQAKIYV…RNLLLELKLL (158 aa)). In terms of domain architecture, OBG-type G spans 159–329 (ADVGLVGFPN…LVYAAAKALP (171 aa)). GTP is bound by residues 165-172 (GFPNVGKS), 190-194 (FTTLV), 212-215 (DIPG), 282-285 (NKMD), and 310-312 (SAA). Mg(2+)-binding residues include serine 172 and threonine 192. In terms of domain architecture, OCT spans 347–424 (TQASAPHRFE…IAGIEFEWEE (78 aa)).

This sequence belongs to the TRAFAC class OBG-HflX-like GTPase superfamily. OBG GTPase family. Monomer. The cofactor is Mg(2+).

It localises to the cytoplasm. Functionally, an essential GTPase which binds GTP, GDP and possibly (p)ppGpp with moderate affinity, with high nucleotide exchange rates and a fairly low GTP hydrolysis rate. Plays a role in control of the cell cycle, stress response, ribosome biogenesis and in those bacteria that undergo differentiation, in morphogenesis control. The sequence is that of GTPase Obg from Desulfitobacterium hafniense (strain Y51).